Reading from the N-terminus, the 386-residue chain is Putrescine N-methyltransferase 4 (386 aa).

3 stretches are compositionally biased toward polar residues: residues 1–14 (MEVI…STIF), 23–48 (GHQS…GHHN), and 57–87 (HQNG…NGNE). The tract at residues 1 to 87 (MEVISTNTNG…GTISHDNGNE (87 aa)) is disordered. Residues 97 to 334 (LGWFSEFSAL…GVIGYMLCST (238 aa)) enclose the PABS domain. S-adenosyl-L-methionine contacts are provided by residues Gln-128, Glu-203, and 234–235 (DG). The active-site Proton acceptor is Asp-253. Residue Tyr-322 participates in S-adenosyl-L-methionine binding.

Belongs to the class I-like SAM-binding methyltransferase superfamily. Putrescine methyltransferase family. In terms of tissue distribution, predominantly expressed in roots.

The enzyme catalyses putrescine + S-adenosyl-L-methionine = N-methylputrescine + S-adenosyl-L-homocysteine + H(+). It participates in alkaloid biosynthesis; nicotine biosynthesis. Involved in the biosynthesis of pyridine alkaloid natural products, leading mainly to the production of anabasine, anatabine, nicotine and nornicotine, effective deterrents against herbivores with antiparasitic and pesticide properties (neurotoxins); nornicotine serves as the precursor in the synthesis of the carcinogen compound N'-nitrosonornicotine (NNN). Methyltransferase that mediates the conversion of putrescine to N-methylputrescine. Promotes leaves ripening. In Nicotiana tabacum (Common tobacco), this protein is Putrescine N-methyltransferase 4.